A 72-amino-acid polypeptide reads, in one-letter code: Protein SlyX homolog (72 aa).

Positions 53 to 72 (KDISPSNIRREEEETPPPHY) are disordered.

This sequence belongs to the SlyX family.

The polypeptide is Protein SlyX homolog (Marinobacter nauticus (strain ATCC 700491 / DSM 11845 / VT8) (Marinobacter aquaeolei)).